The sequence spans 1342 residues: DNA-directed RNA polymerase subunit beta (1342 aa).

N6-acetyllysine occurs at positions 1022 and 1200.

The protein belongs to the RNA polymerase beta chain family. As to quaternary structure, the RNAP catalytic core consists of 2 alpha, 1 beta, 1 beta' and 1 omega subunit. When a sigma factor is associated with the core the holoenzyme is formed, which can initiate transcription.

It catalyses the reaction RNA(n) + a ribonucleoside 5'-triphosphate = RNA(n+1) + diphosphate. Its function is as follows. DNA-dependent RNA polymerase catalyzes the transcription of DNA into RNA using the four ribonucleoside triphosphates as substrates. The protein is DNA-directed RNA polymerase subunit beta of Shigella flexneri serotype 5b (strain 8401).